A 410-amino-acid polypeptide reads, in one-letter code: Benzene 1,2-dioxygenase system ferredoxin--NAD(+) reductase subunit (410 aa).

4–35 contributes to the FAD binding site; the sequence is HVAIIGNGVAGFTTAQALRAEGYEGRISLIGE. 145–173 is an NAD(+) binding site; the sequence is RLLIVGGGLIGCEVATTARKLGLSVTILE.

This sequence belongs to the bacterial ring-hydroxylating dioxygenase ferredoxin reductase family. This dioxygenase system consists of four proteins: the two subunits of the hydroxylase component (BedC1 and BedC2), a ferredoxin (BedB) and a ferredoxin reductase (BedA). It depends on FAD as a cofactor.

The enzyme catalyses 2 reduced [2Fe-2S]-[ferredoxin] + NAD(+) + H(+) = 2 oxidized [2Fe-2S]-[ferredoxin] + NADH. It functions in the pathway aromatic compound metabolism; benzene degradation; catechol from benzene: step 1/2. Part of the electron transfer component of benzene 1,2-dioxygenase, transfers electrons from ferredoxin to NADH. This is Benzene 1,2-dioxygenase system ferredoxin--NAD(+) reductase subunit (bedA) from Pseudomonas putida (Arthrobacter siderocapsulatus).